Consider the following 300-residue polypeptide: Actin-related protein 2/3 complex subunit 2-B (300 aa).

This sequence belongs to the ARPC2 family. Component of the Arp2/3 complex composed of actr2/arp2, actr3/arp3, arpc1 (arpc1a or arpc1b), arpc2, arpc3, arpc4 and arpc5.

The protein localises to the cytoplasm. It localises to the cytoskeleton. Its subcellular location is the cell projection. It is found in the nucleus. In terms of biological role, actin-binding component of the Arp2/3 complex, a multiprotein complex that mediates actin polymerization upon stimulation by nucleation-promoting factor (NPF). The Arp2/3 complex mediates the formation of branched actin networks in the cytoplasm, providing the force for cell motility. In addition to its role in the cytoplasmic cytoskeleton, the Arp2/3 complex also promotes actin polymerization in the nucleus, thereby regulating gene transcription and repair of damaged DNA. The Arp2/3 complex promotes homologous recombination (HR) repair in response to DNA damage by promoting nuclear actin polymerization, leading to drive motility of double-strand breaks (DSBs). This chain is Actin-related protein 2/3 complex subunit 2-B (arpc2-b), found in Xenopus laevis (African clawed frog).